The following is a 310-amino-acid chain: tRNA-cytidine(32) 2-sulfurtransferase (310 aa).

The PP-loop motif motif lies at 47-52 (SGGKDS). Residues Cys-122, Cys-125, and Cys-213 each coordinate [4Fe-4S] cluster.

It belongs to the TtcA family. As to quaternary structure, homodimer. The cofactor is Mg(2+). It depends on [4Fe-4S] cluster as a cofactor.

It is found in the cytoplasm. The catalysed reaction is cytidine(32) in tRNA + S-sulfanyl-L-cysteinyl-[cysteine desulfurase] + AH2 + ATP = 2-thiocytidine(32) in tRNA + L-cysteinyl-[cysteine desulfurase] + A + AMP + diphosphate + H(+). The protein operates within tRNA modification. Catalyzes the ATP-dependent 2-thiolation of cytidine in position 32 of tRNA, to form 2-thiocytidine (s(2)C32). The sulfur atoms are provided by the cysteine/cysteine desulfurase (IscS) system. In Haemophilus influenzae (strain 86-028NP), this protein is tRNA-cytidine(32) 2-sulfurtransferase.